The sequence spans 430 residues: Aspartate aminotransferase, mitochondrial (430 aa).

The transit peptide at 1-29 (MALLHSGRVLSGVASAFHPGLAAAASARA) directs the protein to the mitochondrion. Threonine 48 is subject to Phosphothreonine. Lysine 59 carries the post-translational modification N6-acetyllysine. Glycine 65 contributes to the substrate binding site. At lysine 73 the chain carries N6-acetyllysine; alternate. Position 73 is an N6-succinyllysine; alternate (lysine 73). Lysine 82 carries the N6-acetyllysine modification. Lysine 90 is modified (N6-acetyllysine; alternate). Position 90 is an N6-succinyllysine; alternate (lysine 90). Tyrosine 96 carries the post-translational modification 3'-nitrotyrosine; alternate. Residue tyrosine 96 is modified to Phosphotyrosine; alternate. An N6-acetyllysine; alternate mark is found at lysine 107, lysine 122, and lysine 159. N6-succinyllysine; alternate occurs at positions 107, 122, and 159. Residue tryptophan 162 participates in substrate binding. At lysine 185 the chain carries N6-acetyllysine; alternate. Residue lysine 185 is modified to N6-succinyllysine; alternate. Asparagine 215 contacts substrate. N6-succinyllysine is present on lysine 227. Lysine 234 bears the N6-acetyllysine mark. N6-acetyllysine; alternate is present on residues lysine 279 and lysine 296. Lysine 279 carries the post-translational modification N6-(pyridoxal phosphate)lysine; alternate. Lysine 296 bears the N6-succinyllysine; alternate mark. Lysine 302 is modified (N6-acetyllysine). Lysine 309 carries the post-translational modification N6-acetyllysine; alternate. N6-succinyllysine; alternate is present on lysine 309. At arginine 313 the chain carries Asymmetric dimethylarginine. At lysine 345 the chain carries N6-acetyllysine. Lysine 363 carries the N6-acetyllysine; alternate modification. The residue at position 363 (lysine 363) is an N6-succinyllysine; alternate. N6-acetyllysine occurs at positions 364 and 387. N6-acetyllysine; alternate is present on residues lysine 396 and lysine 404. 2 positions are modified to N6-succinyllysine; alternate: lysine 396 and lysine 404. Arginine 407 is a substrate binding site.

The protein belongs to the class-I pyridoxal-phosphate-dependent aminotransferase family. In terms of assembly, homodimer. The cofactor is pyridoxal 5'-phosphate.

It is found in the mitochondrion matrix. It localises to the cell membrane. It catalyses the reaction L-aspartate + 2-oxoglutarate = oxaloacetate + L-glutamate. It carries out the reaction L-kynurenine + 2-oxoglutarate = kynurenate + L-glutamate + H2O. Its function is as follows. Catalyzes the irreversible transamination of the L-tryptophan metabolite L-kynurenine to form kynurenic acid (KA). As a member of the malate-aspartate shuttle, it has a key role in the intracellular NAD(H) redox balance. Is important for metabolite exchange between mitochondria and cytosol, and for amino acid metabolism. Facilitates cellular uptake of long-chain free fatty acids. The protein is Aspartate aminotransferase, mitochondrial (GOT2) of Sus scrofa (Pig).